The sequence spans 178 residues: Small ribosomal subunit protein uS5 (178 aa).

Residues 13–76 (LEERVVQINR…EAAKRNLIRV (64 aa)) enclose the S5 DRBM domain. The interval 156–178 (ASRRDMTPQELMERRTRRETEAA) is disordered.

It belongs to the universal ribosomal protein uS5 family. In terms of assembly, part of the 30S ribosomal subunit. Contacts proteins S4 and S8.

Functionally, with S4 and S12 plays an important role in translational accuracy. Located at the back of the 30S subunit body where it stabilizes the conformation of the head with respect to the body. This is Small ribosomal subunit protein uS5 from Chloroflexus aurantiacus (strain ATCC 29364 / DSM 637 / Y-400-fl).